The following is a 102-amino-acid chain: ATP-dependent Clp protease adapter protein ClpS (102 aa).

Belongs to the ClpS family. As to quaternary structure, binds to the N-terminal domain of the chaperone ClpA.

Involved in the modulation of the specificity of the ClpAP-mediated ATP-dependent protein degradation. This chain is ATP-dependent Clp protease adapter protein ClpS, found in Desulfotalea psychrophila (strain LSv54 / DSM 12343).